Consider the following 293-residue polypeptide: MATH domain and coiled-coil domain-containing protein At3g58400 (293 aa).

The MATH domain maps to 3-126; sequence RSRSQNLITE…NGELKIVAEI (124 aa). Residues 227 to 285 are a coiled coil; it reads KLDWLENKLYEVAQKKEDDEAGETRLREMEEKLKDLKLKCSKMEALVEEEKAKVSAAKA.

The protein is MATH domain and coiled-coil domain-containing protein At3g58400 of Arabidopsis thaliana (Mouse-ear cress).